The sequence spans 484 residues: Calcium uniporter protein, mitochondrial (484 aa).

A mitochondrion-targeting transit peptide spans 1 to 33 (MGHVLGGTLLAANRLARPPAVVLGKPRVCCWRA). Topologically, residues 34–304 (SPWPVIVSSA…CDLLAHKGAH (271 aa)) are mitochondrial matrix. 2 disordered regions span residues 59–104 (ARYE…KGRL) and 188–227 (YTGGNKSNDGRREESNGNGSNVASYSGLGREGPSKGDTHW). Residues 61-82 (YEARGRSTTQRKVDDRPWHRES) are compositionally biased toward basic and acidic residues. The segment covering 83–93 (SGSLPKSTSPD) has biased composition (polar residues). Residues 305–326 (ALAKGGFAALAAWWGIVYYVTF) form a helical membrane-spanning segment. Residues 327 to 334 (HTDMGWDL) lie on the Mitochondrial intermembrane side of the membrane. The Selectivity filter signature appears at 332–340 (WDLVEPITY). Residues 335–355 (VEPITYLAGLASIMGGYLWFL) traverse the membrane as a helical segment. E336 serves as a coordination point for Ca(2+). The Mitochondrial matrix portion of the chain corresponds to 356 to 484 (FISRDLSYKA…NEAAANVPGD (129 aa)). Composition is skewed to basic and acidic residues over residues 426–435 (KEVLEEEKGG) and 452–462 (DHDHDHDHVSH). Positions 426–484 (KEVLEEEKGGKARKREQEDEDGDGDDDHDHDHDHVSHGAELQGQDILHANEAAANVPGD) are disordered.

It belongs to the MCU (TC 1.A.77) family. Homotetramer, assembles in a dimer or dimers configuration with two interfaces.

Its subcellular location is the mitochondrion inner membrane. It catalyses the reaction Ca(2+)(in) = Ca(2+)(out). Its activity is regulated as follows. Inhibited by ruthenium red or its derivative Ru360. Functionally, highly selective calcium channel localized to the inner mitochondrial membrane, which mediates calcium uptake into the mitochondrial matrix. Mitochondrial calcium homeostasis plays key roles in cellular physiology and regulates ATP production, cytoplasmic calcium signals and activation of cell death pathways. Sufficient to operate as a pore-forming channel without the need of calcium-sensor or auxiliary subunit. The protein is Calcium uniporter protein, mitochondrial of Metarhizium acridum (strain CQMa 102).